We begin with the raw amino-acid sequence, 222 residues long: Octanoyltransferase (222 aa).

Residues 35-214 (GTAPELIWLL…HLDGFLARLD (180 aa)) form the BPL/LPL catalytic domain. Substrate-binding positions include 73 to 80 (RGGRYTYH), 145 to 147 (AIG), and 158 to 160 (GFS). The active-site Acyl-thioester intermediate is the Cys176.

It belongs to the LipB family.

The protein resides in the cytoplasm. The enzyme catalyses octanoyl-[ACP] + L-lysyl-[protein] = N(6)-octanoyl-L-lysyl-[protein] + holo-[ACP] + H(+). The protein operates within protein modification; protein lipoylation via endogenous pathway; protein N(6)-(lipoyl)lysine from octanoyl-[acyl-carrier-protein]: step 1/2. Catalyzes the transfer of endogenously produced octanoic acid from octanoyl-acyl-carrier-protein onto the lipoyl domains of lipoate-dependent enzymes. Lipoyl-ACP can also act as a substrate although octanoyl-ACP is likely to be the physiological substrate. The protein is Octanoyltransferase of Novosphingobium aromaticivorans (strain ATCC 700278 / DSM 12444 / CCUG 56034 / CIP 105152 / NBRC 16084 / F199).